Consider the following 234-residue polypeptide: Glutathione S-transferase 1 (234 aa).

Residues 3–90 (LPIIKVHWLD…YVLQHFDHSH (88 aa)) form the GST N-terminal domain. The GST C-terminal domain occupies 96–234 (DADIADQINY…EKARALGSNF (139 aa)).

The protein belongs to the GST superfamily. In terms of assembly, homodimer.

It localises to the endoplasmic reticulum membrane. The catalysed reaction is RX + glutathione = an S-substituted glutathione + a halide anion + H(+). This chain is Glutathione S-transferase 1 (GTT1), found in Saccharomyces cerevisiae (strain ATCC 204508 / S288c) (Baker's yeast).